We begin with the raw amino-acid sequence, 368 residues long: Protein pxr1 (368 aa).

2 disordered regions span residues 1–28 (MGLA…TDSF) and 161–339 (KEKA…PMGI). The segment covering 15-27 (DPNNTRWSGNTDS) has biased composition (polar residues). One can recognise a G-patch domain in the interval 25 to 79 (TDSFGHRMMKSQGWTPGEYLGAKDAAHAEFHTEANASHIRVVIKDNTLGLGAKIG). The span at 168-182 (SSEESDSSSDEEEEK) shows a compositional bias: acidic residues. 4 stretches are compositionally biased toward basic residues: residues 209–226 (SKKS…KSKK), 242–254 (KSKK…KSKS), 271–283 (KARK…KKRK), and 301–312 (SSKKSKKDKHKS). Low complexity predominate over residues 313-324 (PSTSKTSTKEST). Over residues 325–334 (PIVSESSGRS) the composition is skewed to polar residues.

The protein belongs to the PINX1 family.

The protein resides in the nucleus. It localises to the nucleolus. Involved in rRNA-processing at A0, A1 and A2 sites and negatively regulates telomerase. The polypeptide is Protein pxr1 (pxr1) (Botryotinia fuckeliana (strain B05.10) (Noble rot fungus)).